The following is a 467-amino-acid chain: tRNA-2-methylthio-N(6)-dimethylallyladenosine synthase (467 aa).

A disordered region spans residues 1-20 (MSDDTTQIEPAMAQETSPRA). The 121-residue stretch at 23–143 (RKVFVKTYGC…LPNALARVRG (121 aa)) folds into the MTTase N-terminal domain. Residues Cys32, Cys68, Cys106, Cys184, Cys188, and Cys191 each coordinate [4Fe-4S] cluster. Positions 170–402 (RKRGVSAFLT…QALLSAQQYA (233 aa)) constitute a Radical SAM core domain. A TRAM domain is found at 405–467 (DSMIGRKMDV…TNSLIAQKLA (63 aa)).

It belongs to the methylthiotransferase family. MiaB subfamily. In terms of assembly, monomer. [4Fe-4S] cluster is required as a cofactor.

It is found in the cytoplasm. It carries out the reaction N(6)-dimethylallyladenosine(37) in tRNA + (sulfur carrier)-SH + AH2 + 2 S-adenosyl-L-methionine = 2-methylsulfanyl-N(6)-dimethylallyladenosine(37) in tRNA + (sulfur carrier)-H + 5'-deoxyadenosine + L-methionine + A + S-adenosyl-L-homocysteine + 2 H(+). In terms of biological role, catalyzes the methylthiolation of N6-(dimethylallyl)adenosine (i(6)A), leading to the formation of 2-methylthio-N6-(dimethylallyl)adenosine (ms(2)i(6)A) at position 37 in tRNAs that read codons beginning with uridine. The polypeptide is tRNA-2-methylthio-N(6)-dimethylallyladenosine synthase (Brucella suis (strain ATCC 23445 / NCTC 10510)).